A 181-amino-acid polypeptide reads, in one-letter code: Protein Syd (181 aa).

This sequence belongs to the Syd family.

The protein resides in the cell inner membrane. Its function is as follows. Interacts with the SecY protein in vivo. May bind preferentially to an uncomplexed state of SecY, thus functioning either as a chelating agent for excess SecY in the cell or as a regulatory factor that negatively controls the translocase function. The sequence is that of Protein Syd from Escherichia coli O17:K52:H18 (strain UMN026 / ExPEC).